The chain runs to 570 residues: Rho GTPase-activating protein gacEE (570 aa).

The PH domain occupies 127–233 (NSDISGVLLK…WVTTINNCID (107 aa)). In terms of domain architecture, C2 spans 224–343 (WVTTINNCID…PNGSEISLWL (120 aa)). Ca(2+) is bound by residues Asp-260, Asp-266, Asp-312, Asp-314, and Asp-320. A Rho-GAP domain is found at 381–567 (NSLEAIVKNR…FVFENSQQIL (187 aa)).

The cofactor is Ca(2+).

The protein localises to the cytoplasm. Its function is as follows. Rho GTPase-activating protein involved in the signal transduction pathway. In Dictyostelium discoideum (Social amoeba), this protein is Rho GTPase-activating protein gacEE (gacEE).